The following is a 689-amino-acid chain: Methionine--tRNA ligase (689 aa).

The 'HIGH' region signature appears at 15–25 (PYANGPIHLGH). The Zn(2+) site is built by C146, C149, C159, and C162. Residues 332 to 336 (KMSKS) carry the 'KMSKS' region motif. An ATP-binding site is contributed by K335. One can recognise a tRNA-binding domain in the interval 588–689 (DFAKIDLRIA…EGAQPGMRVK (102 aa)).

Belongs to the class-I aminoacyl-tRNA synthetase family. MetG type 1 subfamily. In terms of assembly, homodimer. Zn(2+) is required as a cofactor.

The protein resides in the cytoplasm. It carries out the reaction tRNA(Met) + L-methionine + ATP = L-methionyl-tRNA(Met) + AMP + diphosphate. In terms of biological role, is required not only for elongation of protein synthesis but also for the initiation of all mRNA translation through initiator tRNA(fMet) aminoacylation. The chain is Methionine--tRNA ligase from Shewanella sp. (strain W3-18-1).